Consider the following 397-residue polypeptide: Succinyl-diaminopimelate desuccinylase (397 aa).

His74 contributes to the Zn(2+) binding site. Residue Asp76 is part of the active site. Asp107 provides a ligand contact to Zn(2+). Glu141 acts as the Proton acceptor in catalysis. Glu142, Glu170, and His368 together coordinate Zn(2+).

This sequence belongs to the peptidase M20A family. DapE subfamily. In terms of assembly, homodimer. Zn(2+) serves as cofactor. Co(2+) is required as a cofactor.

It carries out the reaction N-succinyl-(2S,6S)-2,6-diaminopimelate + H2O = (2S,6S)-2,6-diaminopimelate + succinate. It functions in the pathway amino-acid biosynthesis; L-lysine biosynthesis via DAP pathway; LL-2,6-diaminopimelate from (S)-tetrahydrodipicolinate (succinylase route): step 3/3. Catalyzes the hydrolysis of N-succinyl-L,L-diaminopimelic acid (SDAP), forming succinate and LL-2,6-diaminopimelate (DAP), an intermediate involved in the bacterial biosynthesis of lysine and meso-diaminopimelic acid, an essential component of bacterial cell walls. The polypeptide is Succinyl-diaminopimelate desuccinylase (Mesorhizobium japonicum (strain LMG 29417 / CECT 9101 / MAFF 303099) (Mesorhizobium loti (strain MAFF 303099))).